Reading from the N-terminus, the 312-residue chain is 26S proteasome non-ATPase regulatory subunit 14 (312 aa).

Residues Val-33–Gln-168 form the MPN domain. Zn(2+) is bound by residues His-115, His-117, and Asp-128. Residues His-115–Asp-128 carry the JAMM motif motif.

Belongs to the peptidase M67A family. PSMD14 subfamily. In terms of assembly, component of the 19S regulatory cap of the 26S proteasome.

Metalloprotease component of the 26S proteasome that specifically cleaves 'Lys-63'-linked polyubiquitin chains. The 26S proteasome is involved in the ATP-dependent degradation of ubiquitinated proteins. The function of the 'Lys-63'-specific deubiquitination of the proteasome is unclear. This chain is 26S proteasome non-ATPase regulatory subunit 14 (rpn-11), found in Caenorhabditis elegans.